The chain runs to 132 residues: ATP synthase epsilon chain, chloroplastic (132 aa).

It belongs to the ATPase epsilon chain family. As to quaternary structure, F-type ATPases have 2 components, CF(1) - the catalytic core - and CF(0) - the membrane proton channel. CF(1) has five subunits: alpha(3), beta(3), gamma(1), delta(1), epsilon(1). CF(0) has three main subunits: a, b and c.

Its subcellular location is the plastid. The protein localises to the chloroplast thylakoid membrane. In terms of biological role, produces ATP from ADP in the presence of a proton gradient across the membrane. The polypeptide is ATP synthase epsilon chain, chloroplastic (Adiantum capillus-veneris (Maidenhair fern)).